Reading from the N-terminus, the 128-residue chain is Aspartate 1-decarboxylase (128 aa).

Ser-25 (schiff-base intermediate with substrate; via pyruvic acid) is an active-site residue. Ser-25 carries the pyruvic acid (Ser) modification. Thr-57 contributes to the substrate binding site. Catalysis depends on Tyr-58, which acts as the Proton donor. A substrate-binding site is contributed by 73-75 (GAA).

This sequence belongs to the PanD family. In terms of assembly, heterooctamer of four alpha and four beta subunits. Pyruvate serves as cofactor. Is synthesized initially as an inactive proenzyme, which is activated by self-cleavage at a specific serine bond to produce a beta-subunit with a hydroxyl group at its C-terminus and an alpha-subunit with a pyruvoyl group at its N-terminus.

It localises to the cytoplasm. It catalyses the reaction L-aspartate + H(+) = beta-alanine + CO2. The protein operates within cofactor biosynthesis; (R)-pantothenate biosynthesis; beta-alanine from L-aspartate: step 1/1. Catalyzes the pyruvoyl-dependent decarboxylation of aspartate to produce beta-alanine. The protein is Aspartate 1-decarboxylase of Chlorobaculum parvum (strain DSM 263 / NCIMB 8327) (Chlorobium vibrioforme subsp. thiosulfatophilum).